Consider the following 637-residue polypeptide: tRNA 5-methylaminomethyl-2-thiouridine biosynthesis bifunctional protein MnmC (637 aa).

Positions 1–20 are disordered; sequence MSERIEWLEDGTAGGSPYSP. The tRNA (mnm(5)s(2)U34)-methyltransferase stretch occupies residues 1–232; sequence MSERIEWLED…KRDNLQGEYQ (232 aa). An FAD-dependent cmnm(5)s(2)U34 oxidoreductase region spans residues 255–637; the sequence is IGAGLAGSAV…YATRLQPSGS (383 aa).

It in the N-terminal section; belongs to the methyltransferase superfamily. tRNA (mnm(5)s(2)U34)-methyltransferase family. In the C-terminal section; belongs to the DAO family. The cofactor is FAD.

It localises to the cytoplasm. The catalysed reaction is 5-aminomethyl-2-thiouridine(34) in tRNA + S-adenosyl-L-methionine = 5-methylaminomethyl-2-thiouridine(34) in tRNA + S-adenosyl-L-homocysteine + H(+). Catalyzes the last two steps in the biosynthesis of 5-methylaminomethyl-2-thiouridine (mnm(5)s(2)U) at the wobble position (U34) in tRNA. Catalyzes the FAD-dependent demodification of cmnm(5)s(2)U34 to nm(5)s(2)U34, followed by the transfer of a methyl group from S-adenosyl-L-methionine to nm(5)s(2)U34, to form mnm(5)s(2)U34. The polypeptide is tRNA 5-methylaminomethyl-2-thiouridine biosynthesis bifunctional protein MnmC (Polaromonas naphthalenivorans (strain CJ2)).